The sequence spans 105 residues: Dynein axonemal light chain 4 (105 aa).

It belongs to the dynein light chain family. Consists of at least two heavy chains and a number of intermediate and light chains.

It localises to the cytoplasm. The protein localises to the cytoskeleton. It is found in the cilium axoneme. Its function is as follows. Force generating protein of respiratory cilia. Produces force towards the minus ends of microtubules. Dynein has ATPase activity. The sequence is that of Dynein axonemal light chain 4 (DNAL4) from Bos taurus (Bovine).